The primary structure comprises 470 residues: Cyclin-dependent kinase E-1 (470 aa).

In terms of domain architecture, Protein kinase spans 25–333 (YNLVGKIGEG…ASQALEHEYF (309 aa)). ATP contacts are provided by residues 31-39 (IGEGTYGLV) and Lys-55. Position 36 is a phosphotyrosine (Tyr-36). Asp-154 acts as the Proton acceptor in catalysis. The tract at residues 428–470 (LNPSVPLQQQRGMAQPHQQQQLRRKDPGMGMSGYAPPNKSRRL) is disordered. The segment covering 432-448 (VPLQQQRGMAQPHQQQQ) has biased composition (polar residues).

It belongs to the protein kinase superfamily. CMGC Ser/Thr protein kinase family. CDC2/CDKX subfamily. As to quaternary structure, interacts with MED14, HDA19 and LUG. Interacts with KIN10. Expressed in roots, leaves and stems. Expressed in young dividing tissue, such as shoot and root tips, lateral root primordia, young leaves and flowers. Expressed in the inflorescence meristem, inflorescence stem and young flowers.

It is found in the nucleus. It catalyses the reaction L-seryl-[protein] + ATP = O-phospho-L-seryl-[protein] + ADP + H(+). The enzyme catalyses L-threonyl-[protein] + ATP = O-phospho-L-threonyl-[protein] + ADP + H(+). The catalysed reaction is [DNA-directed RNA polymerase] + ATP = phospho-[DNA-directed RNA polymerase] + ADP + H(+). Its function is as follows. Involved in cell differentiation. Required for the specification of stamen and carpel identities and for the proper termination of stem cells in the floral meristem. The chain is Cyclin-dependent kinase E-1 (CDKE-1) from Arabidopsis thaliana (Mouse-ear cress).